We begin with the raw amino-acid sequence, 472 residues long: Uronate isomerase (472 aa).

It belongs to the metallo-dependent hydrolases superfamily. Uronate isomerase family.

It carries out the reaction D-glucuronate = D-fructuronate. The catalysed reaction is aldehydo-D-galacturonate = keto-D-tagaturonate. It participates in carbohydrate metabolism; pentose and glucuronate interconversion. The sequence is that of Uronate isomerase from Shouchella clausii (strain KSM-K16) (Alkalihalobacillus clausii).